We begin with the raw amino-acid sequence, 1343 residues long: uncharacterized protein (1343 aa).

A helical transmembrane segment spans residues 432-449 (LYVYFVTTKTGVVAFSLL).

The protein belongs to the IIV-6 295L family.

The protein resides in the membrane. This is an uncharacterized protein from Acheta domesticus (House cricket).